The sequence spans 176 residues: Inorganic pyrophosphatase (176 aa).

Residues Lys-30, Arg-44, and Tyr-56 each contribute to the substrate site. Mg(2+) is bound by residues Asp-66, Asp-71, and Asp-103. Residue Tyr-142 participates in substrate binding.

Belongs to the PPase family. In terms of assembly, homohexamer. Mg(2+) is required as a cofactor.

The protein localises to the cytoplasm. The catalysed reaction is diphosphate + H2O = 2 phosphate + H(+). Its function is as follows. Catalyzes the hydrolysis of inorganic pyrophosphate (PPi) forming two phosphate ions. This Escherichia coli O157:H7 protein is Inorganic pyrophosphatase.